Here is a 420-residue protein sequence, read N- to C-terminus: Tyrosine--tRNA ligase (420 aa).

Residue tyrosine 36 coordinates L-tyrosine. The short motif at 41-50 (PTADSLHIGH) is the 'HIGH' region element. 2 residues coordinate L-tyrosine: tyrosine 170 and glutamine 174. The 'KMSKS' region motif lies at 231–235 (KFGKS). ATP is bound at residue lysine 234. The 68-residue stretch at 353–420 (TNIVEVLIET…KKKYFMVNYQ (68 aa)) folds into the S4 RNA-binding domain.

Belongs to the class-I aminoacyl-tRNA synthetase family. TyrS type 1 subfamily. In terms of assembly, homodimer.

Its subcellular location is the cytoplasm. It carries out the reaction tRNA(Tyr) + L-tyrosine + ATP = L-tyrosyl-tRNA(Tyr) + AMP + diphosphate + H(+). Its function is as follows. Catalyzes the attachment of tyrosine to tRNA(Tyr) in a two-step reaction: tyrosine is first activated by ATP to form Tyr-AMP and then transferred to the acceptor end of tRNA(Tyr). This Staphylococcus aureus (strain COL) protein is Tyrosine--tRNA ligase.